A 188-amino-acid chain; its full sequence is GMP synthase [glutamine-hydrolyzing] subunit A (188 aa).

A Glutamine amidotransferase type-1 domain is found at 1 to 188; that stretch reads MIIIMDNGGQ…RNFAKICGEL (188 aa). C78 (nucleophile) is an active-site residue. Catalysis depends on residues H165 and E167.

Heterodimer composed of a glutamine amidotransferase subunit (A) and a GMP-binding subunit (B).

It carries out the reaction XMP + L-glutamine + ATP + H2O = GMP + L-glutamate + AMP + diphosphate + 2 H(+). The protein operates within purine metabolism; GMP biosynthesis; GMP from XMP (L-Gln route): step 1/1. Its function is as follows. Catalyzes the synthesis of GMP from XMP. The protein is GMP synthase [glutamine-hydrolyzing] subunit A of Pyrococcus furiosus (strain ATCC 43587 / DSM 3638 / JCM 8422 / Vc1).